Reading from the N-terminus, the 388-residue chain is MKAMILAAGKGTRVRPITHTIPKPMIPILQKPVMEFLLELLRQHGFDQIMVNVSHLAEEIESYFRDGQRFGVQIAYSFEGNIVDGDLVGKALGSAGGLKKIQEFNPFFDDTFVVLCGDALIDLDLTTAVKLHREKGAIATIITKTVPQELVSSYGVVVTDDNGKILTFQEKPAVEEALSTEINTGIYIFEPEVIDYIPSGQEYDLGGDLFPKLVDSGLPFYAVNMDFEWVDIGKVPDYWQAIRGVLSREIKNVQIPGIEVRPGVYTGINVAANWDNIEIEGPVYIGGMTRIEDGVKIIGPSMIGPSCLICQGAVVDNSVIFEYSRLGPGARLVDKLVFGRYCVDKTGAAIDVQAAALDWLITDARHAAVQYRQEYPSQREISKLLQPE.

Asp118 contributes to the Mg(2+) binding site.

This sequence belongs to the CugP-type UDP-glucose pyrophosphorylase family. The cofactor is Mg(2+).

The catalysed reaction is alpha-D-glucose 1-phosphate + UTP + H(+) = UDP-alpha-D-glucose + diphosphate. In terms of biological role, catalyzes the formation of UDP-glucose, from UTP and glucose 1-phosphate. Is highly specific since it cannot use other NTPs such as dTTP, CTP, ATP, and GTP, and other sugar-1P such as GlcNAc-1P, Gal-1P, and Man-1P, as substrates. Has probably a central and essential role as the substrate supplier for galactolipid synthesis; galactolipids are major constituents of the photosynthetic thylakoid membrane and important for photosynthetic activity. In Synechocystis sp. (strain ATCC 27184 / PCC 6803 / Kazusa), this protein is UTP--glucose-1-phosphate uridylyltransferase.